A 126-amino-acid chain; its full sequence is LWamide neuropeptides (126 aa).

Positions 1 to 2 are cleaved as a propeptide — 1; the sequence is KR. The segment at 1–126 is disordered; sequence KRQQPGLWGR…KSAIPKAKPQ (126 aa). Trp8 is modified (tryptophan amide). Residues 11–15 constitute a propeptide, 2; sequence SADPQ. Trp20 and Trp29 each carry tryptophan amide. Positions 32–36 are cleaved as a propeptide — 2; sequence SADPQ. Trp41 and Trp50 each carry tryptophan amide. Positions 53–57 are cleaved as a propeptide — 2; the sequence is SADPQ. Residues Trp62 and Trp71 each carry the tryptophan amide modification. The propeptide at 74-78 is 2; sequence SADPQ. Trp83 is subject to Tryptophan amide. A propeptide spans 86–93 (3); it reads SAGSGKRQ. Trp99 is modified (tryptophan amide). The propeptide at 102–126 is 4; sequence SAEPPQYKELEDLKQKSAIPKAKPQ. A compositionally biased stretch (basic and acidic residues) spans 107–116; sequence QYKELEDLKQ.

Belongs to the LWamide neuropeptide family.

Its subcellular location is the secreted. Metamorphosin A may be part of an internal signaling system involved in control of metamorphosis. The polypeptide is LWamide neuropeptides (Anemonia sulcata (Mediterranean snakelocks sea anemone)).